A 498-amino-acid chain; its full sequence is Glycerol kinase (498 aa).

Position 12 (Thr12) interacts with ADP. ATP is bound by residues Thr12, Thr13, and Ser14. Thr12 is a sn-glycerol 3-phosphate binding site. Residue Arg16 participates in ADP binding. Residues Arg82, Glu83, Tyr134, and Asp244 each coordinate sn-glycerol 3-phosphate. Residues Arg82, Glu83, Tyr134, Asp244, and Gln245 each coordinate glycerol. Residues Thr266 and Gly310 each coordinate ADP. Residues Thr266, Gly310, Gln314, and Gly411 each coordinate ATP. ADP is bound by residues Gly411 and Asn415.

This sequence belongs to the FGGY kinase family.

The enzyme catalyses glycerol + ATP = sn-glycerol 3-phosphate + ADP + H(+). The protein operates within polyol metabolism; glycerol degradation via glycerol kinase pathway; sn-glycerol 3-phosphate from glycerol: step 1/1. Inhibited by fructose 1,6-bisphosphate (FBP). Its function is as follows. Key enzyme in the regulation of glycerol uptake and metabolism. Catalyzes the phosphorylation of glycerol to yield sn-glycerol 3-phosphate. The protein is Glycerol kinase of Chloroflexus aurantiacus (strain ATCC 29364 / DSM 637 / Y-400-fl).